Here is a 102-residue protein sequence, read N- to C-terminus: Cytochrome c (102 aa).

G1 carries the post-translational modification N-acetylglycine. Over residues 1–11 the composition is skewed to basic and acidic residues; it reads GDAERGKKLFE. The segment at 1-26 is disordered; sequence GDAERGKKLFESRAGQCHSSQKGVNS. Heme c-binding residues include C17, H18, and M79. The segment covering 17 to 26 has biased composition (polar residues); that stretch reads CHSSQKGVNS. Residue K85 is modified to N6,N6,N6-trimethyllysine.

This sequence belongs to the cytochrome c family. In terms of processing, binds 1 heme c group covalently per subunit.

The protein resides in the mitochondrion intermembrane space. Electron carrier protein. The oxidized form of the cytochrome c heme group can accept an electron from the heme group of the cytochrome c1 subunit of cytochrome reductase. Cytochrome c then transfers this electron to the cytochrome oxidase complex, the final protein carrier in the mitochondrial electron-transport chain. The protein is Cytochrome c of Euglena viridis (Cercaria viridis).